A 96-amino-acid polypeptide reads, in one-letter code: Small ribosomal subunit protein bS18c (96 aa).

This sequence belongs to the bacterial ribosomal protein bS18 family. As to quaternary structure, part of the 30S ribosomal subunit.

Its subcellular location is the plastid. The protein resides in the chloroplast. This is Small ribosomal subunit protein bS18c (rps18) from Pinus thunbergii (Japanese black pine).